The chain runs to 223 residues: Proteasome subunit beta type-1 (223 aa).

The protein belongs to the peptidase T1B family. The 26S proteasome consists of a 20S proteasome core and two 19S regulatory subunits. The 20S proteasome core is composed of 28 subunits that are arranged in four stacked rings, resulting in a barrel-shaped structure. The two end rings are each formed by seven alpha subunits, and the two central rings are each formed by seven beta subunits. The catalytic chamber with the active sites is on the inside of the barrel.

The protein localises to the cytoplasm. Its subcellular location is the nucleus. Its function is as follows. Non-catalytic component of the proteasome, a multicatalytic proteinase complex which is characterized by its ability to cleave peptides with Arg, Phe, Tyr, Leu, and Glu adjacent to the leaving group at neutral or slightly basic pH. The proteasome has an ATP-dependent proteolytic activity. The polypeptide is Proteasome subunit beta type-1 (PBF1) (Petunia hybrida (Petunia)).